The following is a 665-amino-acid chain: Ribonuclease R 2 (665 aa).

Residues 202–528 enclose the RNB domain; the sequence is REDYRNEITY…LIIHRLLHLY (327 aa). Residues 579-662 enclose the S1 motif domain; the sequence is GEVYTGTITG…RKGTVDFEQI (84 aa).

Belongs to the RNR ribonuclease family. RNase R subfamily.

Its subcellular location is the cytoplasm. It carries out the reaction Exonucleolytic cleavage in the 3'- to 5'-direction to yield nucleoside 5'-phosphates.. In terms of biological role, 3'-5' exoribonuclease that releases 5'-nucleoside monophosphates and is involved in maturation of structured RNAs. This is Ribonuclease R 2 from Lactococcus lactis subsp. lactis (strain IL1403) (Streptococcus lactis).